A 381-amino-acid polypeptide reads, in one-letter code: Putative F-box/kelch-repeat protein At1g60570 (381 aa).

Residues 19 to 65 (PTLIPSLPEELILSILARVSRLSYRSLSLVCKRFHSLLTSGEIYRFR) enclose the F-box domain. 4 Kelch repeats span residues 126–169 (KIYK…LIDG), 171–218 (IYVT…ERTN), 220–266 (LLVD…VIEN), and 269–314 (YDFF…DYGG).

The protein is Putative F-box/kelch-repeat protein At1g60570 of Arabidopsis thaliana (Mouse-ear cress).